The following is a 135-amino-acid chain: MNLKQIAKDTAKTLQSYLTYQALRTVLAQLGETNPPLALWLHNFSAGKVQDGEKYIEELFLEKPDLALRIMTVREHIAEEIAEFLPEMVVTGIQQANMEKRRQHLERMTQVSLSHPSPESEQQQFSDPDWDNLAS.

The tract at residues 103-135 (QHLERMTQVSLSHPSPESEQQQFSDPDWDNLAS) is disordered. Over residues 109–126 (TQVSLSHPSPESEQQQFS) the composition is skewed to polar residues.

The protein belongs to the RbcX family. As to quaternary structure, homodimer. Interacts with the exposed C-terminal peptide of RbcL ('Glu-459-Asp-468'); binds 1 RbcL peptide per homodimer. Contacts a second RbcL monomer via its peripheral polar surface. A slightly longer RbcL peptide binds to RbcX2 with a higher affinity.

It localises to the carboxysome. Its subcellular location is the cytoplasm. Functionally, an RbcL-specific chaperone. The central cleft of the RbcX homodimer (RbcX2) binds the C-terminus of an RbcL monomer, stabilizing the C-terminus and probably preventing its reassociation with chaperonin GroEL-ES. At the same time the peripheral region of RbcX2 binds a second RbcL monomer, bridging the RbcL homodimers in the correct orientation. The RbcX2(2)-bound RbcL dimers then assemble into the RbcL8 core (RbcL8-(RbcX2)8). RbcS binding triggers the release of RbcX2. Required for optimal reconstitution of RuBisCO upon expression of rbcL-rbcS subunits in E.coli. This chain is RuBisCO chaperone RbcX, found in Anabaena sp. (strain CA / ATCC 33047).